Here is a 154-residue protein sequence, read N- to C-terminus: MNFEGKLIGKDLKVAIVVSRFNDFITGRLLEGAKDTLIRHDVNEDNIDVAFVPGAFEIPLVAKKLASSGNYDAVITLGCVIRGATSHYDYVCNEVAKGVSKVNDQTNVPVIFGILTTESIEQAVERAGTKAGNKGAEAAVSAIEMANLLKSIKA.

Residues Phe-21, 55-57 (AFE), and 79-81 (CVI) contribute to the 5-amino-6-(D-ribitylamino)uracil site. 84 to 85 (AT) provides a ligand contact to (2S)-2-hydroxy-3-oxobutyl phosphate. The active-site Proton donor is His-87. Phe-112 is a binding site for 5-amino-6-(D-ribitylamino)uracil. A (2S)-2-hydroxy-3-oxobutyl phosphate-binding site is contributed by Arg-126.

Belongs to the DMRL synthase family. In terms of assembly, forms an icosahedral capsid composed of 60 subunits, arranged as a dodecamer of pentamers.

It catalyses the reaction (2S)-2-hydroxy-3-oxobutyl phosphate + 5-amino-6-(D-ribitylamino)uracil = 6,7-dimethyl-8-(1-D-ribityl)lumazine + phosphate + 2 H2O + H(+). It functions in the pathway cofactor biosynthesis; riboflavin biosynthesis; riboflavin from 2-hydroxy-3-oxobutyl phosphate and 5-amino-6-(D-ribitylamino)uracil: step 1/2. Its function is as follows. Catalyzes the formation of 6,7-dimethyl-8-ribityllumazine by condensation of 5-amino-6-(D-ribitylamino)uracil with 3,4-dihydroxy-2-butanone 4-phosphate. This is the penultimate step in the biosynthesis of riboflavin. This Staphylococcus aureus (strain Newman) protein is 6,7-dimethyl-8-ribityllumazine synthase.